The following is a 766-amino-acid chain: Semaphorin-4E (766 aa).

An N-terminal signal peptide occupies residues 1–24 (MMSLLAVLCVLYVWSPAMLTGGLG). At 25 to 664 (STLDSLPRKT…LHHVKEKERT (640 aa)) the chain is on the extracellular side. Residues 27–499 (LDSLPRKTVP…SEVGVVQLSI (473 aa)) form the Sema domain. N-linked (GlcNAc...) asparagine glycosylation occurs at Asn52. Disulfide bonds link Cys100-Cys111, Cys129-Cys138, Cys261-Cys373, and Cys285-Cys329. Asn433 carries an N-linked (GlcNAc...) asparagine glycan. In terms of domain architecture, PSI spans 501-552 (ECGRYQTCLDCVLARDPHCGWDLDTEHCATINSIHRTRSSTVIQSLNDGDAS). 2 cysteine pairs are disulfide-bonded: Cys502–Cys519 and Cys511–Cys528. Positions 555–640 (PAIGVSKPVN…QRKYQTQHVA (86 aa)) constitute an Ig-like C2-type domain. N-linked (GlcNAc...) asparagine glycosylation is found at Asn564 and Asn612. Cys577 and Cys623 are oxidised to a cystine. The chain crosses the membrane as a helical span at residues 665 to 685 (LVAMVVILSLVLAALLIWNLY). The Cytoplasmic segment spans residues 686 to 766 (KGHLSLPCLH…LKYIDDESEI (81 aa)). Residues 724–750 (FNSNNNHANDQRYSSSRETDRLSTTAG) are disordered.

It belongs to the semaphorin family.

Its subcellular location is the membrane. This Danio rerio (Zebrafish) protein is Semaphorin-4E (sema4e).